The following is a 37-amino-acid chain: Large ribosomal subunit protein bL36c (37 aa).

This sequence belongs to the bacterial ribosomal protein bL36 family.

The protein resides in the plastid. It is found in the chloroplast. This chain is Large ribosomal subunit protein bL36c, found in Chaetosphaeridium globosum (Charophycean green alga).